A 239-amino-acid chain; its full sequence is Small ribosomal subunit protein uS5 (239 aa).

The interval 1–62 (MADETEIQAA…DDRRGSEEQG (62 aa)) is disordered. Residues 9–19 (AAAPAEAAPGA) are compositionally biased toward low complexity. A compositionally biased stretch (basic and acidic residues) spans 34–62 (GGNDRGGDRGRGRDGRGRRDDRRGSEEQG). The region spanning 65-128 (LIEKLVHINR…AAAKKAMVRV (64 aa)) is the S5 DRBM domain.

The protein belongs to the universal ribosomal protein uS5 family. Part of the 30S ribosomal subunit. Contacts proteins S4 and S8.

Functionally, with S4 and S12 plays an important role in translational accuracy. In terms of biological role, located at the back of the 30S subunit body where it stabilizes the conformation of the head with respect to the body. This is Small ribosomal subunit protein uS5 from Rhizorhabdus wittichii (strain DSM 6014 / CCUG 31198 / JCM 15750 / NBRC 105917 / EY 4224 / RW1) (Sphingomonas wittichii).